A 427-amino-acid polypeptide reads, in one-letter code: Lactadherin (427 aa).

Residues 1 to 18 (MPCPRLLAALFCSSGLFA) form the signal peptide. EGF-like domains follow at residues 20–59 (SGDF…LLCN) and 62–106 (EHGP…IHCE). 3 cysteine pairs are disulfide-bonded: Cys-24–Cys-35, Cys-29–Cys-47, and Cys-49–Cys-58. Residue Ser-27 is glycosylated (O-linked (Fuc...) serine; in PAS-6). Thr-34 carries O-linked (Fuc...) threonine; in PAS-7 glycosylation. Residue Asn-59 is glycosylated (N-linked (GlcNAc...) (hybrid) asparagine; in PAS-6 and PAS-7). 6 disulfide bridges follow: Cys-66–Cys-77, Cys-71–Cys-94, Cys-96–Cys-105, Cys-109–Cys-265, Cys-252–Cys-256, and Cys-270–Cys-427. The Cell attachment site signature appears at 85–87 (RGD). F5/8 type C domains follow at residues 109–265 (CTSP…LLGC) and 270–427 (CTEP…LLGC). Residue Asn-227 is glycosylated (N-linked (GlcNAc...) (high mannose) asparagine; in PAS-6).

In terms of processing, the two O-linked glycans consist of Gal, GlcNAc and Fuc, with probably Fuc as reducing terminal sugar. As to expression, milk and spermatozoan. Also present in epididymis, kidney, heart, lymphatic gland and spleen but not esophagus, small intestine, muscle and liver.

Its subcellular location is the membrane. It localises to the secreted. The protein resides in the cytoplasmic vesicle. The protein localises to the secretory vesicle. It is found in the acrosome membrane. Its function is as follows. Contributes to phagocytic removal of apoptotic cells in many tissues. Plays an important role in the maintenance of intestinal epithelial homeostasis and the promotion of mucosal healing. Promotes VEGF-dependent neovascularization. Specific ligand for the alpha-v/beta-3 and alpha-v/beta-5 receptors. Also binds to phosphatidylserine-enriched cell surfaces in a receptor-independent manner. Zona pellucida-binding protein which may play a role in gamete interaction. The sequence is that of Lactadherin (MFGE8) from Bos taurus (Bovine).